Reading from the N-terminus, the 81-residue chain is Acyl carrier protein (81 aa).

In terms of domain architecture, Carrier spans 4 to 79 (SEIFGKVKDI…AAVDFIAGKV (76 aa)). S39 carries the O-(pantetheine 4'-phosphoryl)serine modification.

Belongs to the acyl carrier protein (ACP) family. 4'-phosphopantetheine is transferred from CoA to a specific serine of apo-ACP by AcpS. This modification is essential for activity because fatty acids are bound in thioester linkage to the sulfhydryl of the prosthetic group.

The protein resides in the cytoplasm. Its pathway is lipid metabolism; fatty acid biosynthesis. Carrier of the growing fatty acid chain in fatty acid biosynthesis. The protein is Acyl carrier protein of Acaryochloris marina (strain MBIC 11017).